The primary structure comprises 526 residues: Cytochrome P450 monooxygenase 253 (526 aa).

3 consecutive transmembrane segments (helical) span residues I13–I33, F115–K135, and I306–L326. Residue C451 coordinates heme.

The protein belongs to the cytochrome P450 family. Requires heme as cofactor.

It is found in the membrane. Its pathway is secondary metabolite biosynthesis. In terms of biological role, cytochrome P450 monooxygenase that is able to use delta(6)-protoilludene as a substrate to produce delta(6)-protoilludene-8-ol. The protein is Cytochrome P450 monooxygenase 253 of Postia placenta (strain ATCC 44394 / Madison 698-R) (Brown rot fungus).